A 34-amino-acid chain; its full sequence is Photosystem II reaction center protein M (34 aa).

A helical transmembrane segment spans residues 5–25; that stretch reads ILAFIATALFILIPTAFLLII.

It belongs to the PsbM family. As to quaternary structure, PSII is composed of 1 copy each of membrane proteins PsbA, PsbB, PsbC, PsbD, PsbE, PsbF, PsbH, PsbI, PsbJ, PsbK, PsbL, PsbM, PsbT, PsbX, PsbY, PsbZ, Psb30/Ycf12, at least 3 peripheral proteins of the oxygen-evolving complex and a large number of cofactors. It forms dimeric complexes.

The protein localises to the plastid. It is found in the chloroplast thylakoid membrane. One of the components of the core complex of photosystem II (PSII). PSII is a light-driven water:plastoquinone oxidoreductase that uses light energy to abstract electrons from H(2)O, generating O(2) and a proton gradient subsequently used for ATP formation. It consists of a core antenna complex that captures photons, and an electron transfer chain that converts photonic excitation into a charge separation. This subunit is found at the monomer-monomer interface. The protein is Photosystem II reaction center protein M of Agrostis stolonifera (Creeping bentgrass).